Consider the following 385-residue polypeptide: Tryptophan--tRNA ligase (385 aa).

A 'HIGH' region motif is present at residues 82 to 90 (PSGPMHIGH). The 'KMSKS' region motif lies at 253–257 (KMSAS).

Belongs to the class-I aminoacyl-tRNA synthetase family.

It localises to the cytoplasm. The catalysed reaction is tRNA(Trp) + L-tryptophan + ATP = L-tryptophyl-tRNA(Trp) + AMP + diphosphate + H(+). The protein is Tryptophan--tRNA ligase of Pyrococcus abyssi (strain GE5 / Orsay).